Consider the following 233-residue polypeptide: Probable RNA 2'-phosphotransferase (233 aa).

Belongs to the KptA/TPT1 family.

Functionally, removes the 2'-phosphate from RNA via an intermediate in which the phosphate is ADP-ribosylated by NAD followed by a presumed transesterification to release the RNA and generate ADP-ribose 1''-2''-cyclic phosphate (APPR&gt;P). May function as an ADP-ribosylase. The protein is Probable RNA 2'-phosphotransferase of Hyperthermus butylicus (strain DSM 5456 / JCM 9403 / PLM1-5).